Reading from the N-terminus, the 358-residue chain is Small ribosomal subunit biogenesis GTPase RsgA (358 aa).

The 159-residue stretch at 76–234 (STEIDRPAVA…LADSPGFNQP (159 aa)) folds into the CP-type G domain. Residues 125–128 (NKID) and 176–184 (GPSGVGKSS) contribute to the GTP site. Residues C259, C264, H266, and C272 each coordinate Zn(2+). The tract at residues 319–358 (TYEPKLANKKYRRPSRRGKNQDQERYENKTLQDIYNDDSE) is disordered. Residues 325–336 (ANKKYRRPSRRG) show a composition bias toward basic residues. A compositionally biased stretch (basic and acidic residues) spans 337-348 (KNQDQERYENKT).

It belongs to the TRAFAC class YlqF/YawG GTPase family. RsgA subfamily. Monomer. Associates with 30S ribosomal subunit, binds 16S rRNA. It depends on Zn(2+) as a cofactor.

It localises to the cytoplasm. Its function is as follows. One of several proteins that assist in the late maturation steps of the functional core of the 30S ribosomal subunit. Helps release RbfA from mature subunits. May play a role in the assembly of ribosomal proteins into the subunit. Circularly permuted GTPase that catalyzes slow GTP hydrolysis, GTPase activity is stimulated by the 30S ribosomal subunit. The sequence is that of Small ribosomal subunit biogenesis GTPase RsgA from Microcystis aeruginosa (strain NIES-843 / IAM M-2473).